The chain runs to 369 residues: 4-hydroxy-3-methylbut-2-en-1-yl diphosphate synthase (flavodoxin) (369 aa).

Residues C270, C273, C305, and E312 each coordinate [4Fe-4S] cluster.

Belongs to the IspG family. [4Fe-4S] cluster is required as a cofactor.

The enzyme catalyses (2E)-4-hydroxy-3-methylbut-2-enyl diphosphate + oxidized [flavodoxin] + H2O + 2 H(+) = 2-C-methyl-D-erythritol 2,4-cyclic diphosphate + reduced [flavodoxin]. It functions in the pathway isoprenoid biosynthesis; isopentenyl diphosphate biosynthesis via DXP pathway; isopentenyl diphosphate from 1-deoxy-D-xylulose 5-phosphate: step 5/6. Functionally, converts 2C-methyl-D-erythritol 2,4-cyclodiphosphate (ME-2,4cPP) into 1-hydroxy-2-methyl-2-(E)-butenyl 4-diphosphate. The sequence is that of 4-hydroxy-3-methylbut-2-en-1-yl diphosphate synthase (flavodoxin) from Pseudomonas syringae pv. syringae (strain B728a).